A 177-amino-acid chain; its full sequence is Isopentenyl-diphosphate Delta-isomerase (177 aa).

Mn(2+) is bound by residues His22 and His28. The 135-residue stretch at 26-160 (LRHKAISVFV…PERFTPWLRI (135 aa)) folds into the Nudix hydrolase domain. The active site involves Cys62. Mn(2+) is bound at residue His64. Glu82 lines the Mg(2+) pocket. Residues Glu108 and Glu110 each contribute to the Mn(2+) site. Glu110 is a catalytic residue.

This sequence belongs to the IPP isomerase type 1 family. Requires Mg(2+) as cofactor. Mn(2+) is required as a cofactor.

The protein resides in the cytoplasm. The catalysed reaction is isopentenyl diphosphate = dimethylallyl diphosphate. Its pathway is isoprenoid biosynthesis; dimethylallyl diphosphate biosynthesis; dimethylallyl diphosphate from isopentenyl diphosphate: step 1/1. It functions in the pathway porphyrin-containing compound metabolism; chlorophyll biosynthesis. Its function is as follows. Catalyzes the 1,3-allylic rearrangement of the homoallylic substrate isopentenyl (IPP) to its highly electrophilic allylic isomer, dimethylallyl diphosphate (DMAPP). The polypeptide is Isopentenyl-diphosphate Delta-isomerase (Cereibacter sphaeroides (strain ATCC 17025 / ATH 2.4.3) (Rhodobacter sphaeroides)).